The following is a 540-amino-acid chain: MKRALISVYDKQGIVEFARGLADLGVEIISTGGTYRTLQGAGIPVREVAEVAGFPEILDGRVKSLQPQIHAGILAMRANPTHMAQLAEHGIGLIDLVVVNLYPFRETVANPAVTLEEAIEKIDIGGPAMVRAAAKNYQDVGVVVNPARYPAVLAELRETGDLSLPTRFSLMLEAFQHTAAYDGAIAGWMATRGREIVATRALGETAPERPIGADPGPQKPAAPSPFPDVLSLTFTKVQELRYGENPHQAAAFYSDGSDGGTVIARAKQLHGKELSFNNINDAHAALELVKEFEEPAAVAIKHANPCGVAVAPTIAEAFRKAYEADTVSIFGGIVALNRPCDRETAEALSKIFLEIVIAPAFAPEALEVLTRKKNLRLLAVGPIDRNPPSGFDMKRVGGGLLVQSWDAIAEDPVAWKPVTKAAPTPEQLRDLAFAMKVCKHVKSNAIVVARDGQTLGVGAGQMNRIDAARFALRQAGEKARGAVLASDAFFPFPDVVEAAGEAGIAAIVQPGGSIRDEESIARADELGLAMVFTGVRHFRH.

The MGS-like domain maps to 1-144 (MKRALISVYD…KNYQDVGVVV (144 aa)). Residues 204–224 (ETAPERPIGADPGPQKPAAPS) form a disordered region.

It belongs to the PurH family.

The enzyme catalyses (6R)-10-formyltetrahydrofolate + 5-amino-1-(5-phospho-beta-D-ribosyl)imidazole-4-carboxamide = 5-formamido-1-(5-phospho-D-ribosyl)imidazole-4-carboxamide + (6S)-5,6,7,8-tetrahydrofolate. It catalyses the reaction IMP + H2O = 5-formamido-1-(5-phospho-D-ribosyl)imidazole-4-carboxamide. It functions in the pathway purine metabolism; IMP biosynthesis via de novo pathway; 5-formamido-1-(5-phospho-D-ribosyl)imidazole-4-carboxamide from 5-amino-1-(5-phospho-D-ribosyl)imidazole-4-carboxamide (10-formyl THF route): step 1/1. It participates in purine metabolism; IMP biosynthesis via de novo pathway; IMP from 5-formamido-1-(5-phospho-D-ribosyl)imidazole-4-carboxamide: step 1/1. The chain is Bifunctional purine biosynthesis protein PurH from Symbiobacterium thermophilum (strain DSM 24528 / JCM 14929 / IAM 14863 / T).